The sequence spans 324 residues: Hairy/enhancer-of-split related with YRPW motif protein 2 (324 aa).

The interval 1–34 is disordered; it reads MKRPCEDSTSDSDMDETIDVGSENNYSGQSNGSF. Residues 8 to 18 show a composition bias toward acidic residues; that stretch reads STSDSDMDETI. Residues 22 to 34 show a composition bias toward polar residues; that stretch reads SENNYSGQSNGSF. One can recognise a bHLH domain in the interval 48–103; the sequence is ARKKRRGIIEKRRRDRINNSLSELRRLVPTAFEKQGSAKLEKAEILQMTVDHLKML. One can recognise an Orange domain in the interval 122–157; that stretch reads LSIGFRECLTEVARYLSSVEGLDSSDPLRVRLVSHL. Positions 294 to 311 are enriched in low complexity; sequence SSSVSTSTTSQQSSGSSS. The disordered stretch occupies residues 294 to 324; it reads SSSVSTSTTSQQSSGSSSKPYRPWGTEVGAF. Positions 314–317 match the YRPW motif motif; the sequence is YRPW.

Belongs to the HEY family.

Its subcellular location is the nucleus. Functionally, transcriptional repressor. Downstream effector of Notch signaling which regulates cell fate choice in angioblasts. Represses the venous cell fate, thereby promoting the arterial cell fate and aorta formation. The sequence is that of Hairy/enhancer-of-split related with YRPW motif protein 2 (hey2) from Danio rerio (Zebrafish).